The primary structure comprises 592 residues: Bifunctional purine biosynthesis protein ATIC (592 aa).

Met-1 is subject to N-acetylmethionine. In terms of domain architecture, MGS-like spans 2–146 (APGQLALFSV…KNHARVTVVC (145 aa)). An IMP cyclohydrolase region spans residues 2–198 (APGQLALFSV…ISDYFRKQYS (197 aa)). Residues 12-14 (SDK), 34-37 (SGGT), 64-67 (RVKT), 101-102 (CN), and 125-126 (DI) contribute to the IMP site. The active-site Proton donor/acceptor; for FAICAR cyclization activity is Lys-137. Lys-199 carries the post-translational modification N6-acetyllysine. An AICAR formyltransferase region spans residues 199 to 592 (KGVSQMPLRY…AHTNLRLFHH (394 aa)). 5-amino-1-(5-phospho-beta-D-ribosyl)imidazole-4-carboxamide is bound by residues 207–208 (RY), His-267, Gly-316, Asp-339, Asn-431, and Arg-451. The Proton acceptor; for AICAR formyltransferase activity role is filled by His-267. Residue Ile-452 coordinates (6R)-10-formyltetrahydrofolate. Position 541 (Phe-541) interacts with 5-amino-1-(5-phospho-beta-D-ribosyl)imidazole-4-carboxamide. Residues Asp-546 and 565–566 (SA) each bind (6R)-10-formyltetrahydrofolate. Arg-588 serves as a coordination point for 5-amino-1-(5-phospho-beta-D-ribosyl)imidazole-4-carboxamide.

The protein belongs to the PurH family. In terms of assembly, homodimer. Associates with internalized INSR complexes on Golgi/endosomal membranes. Interacts with INSR; ATIC together with PRKAA2/AMPK2 and HACD3/PTPLAD1 is proposed to be part of a signaling network regulating INSR autophosphorylation and endocytosis. Present in the heart, brain, placenta, lung, liver, skeletal muscle, kidney, pancreas.

The protein resides in the cytoplasm. It is found in the cytosol. It catalyses the reaction (6R)-10-formyltetrahydrofolate + 5-amino-1-(5-phospho-beta-D-ribosyl)imidazole-4-carboxamide = 5-formamido-1-(5-phospho-D-ribosyl)imidazole-4-carboxamide + (6S)-5,6,7,8-tetrahydrofolate. It carries out the reaction 10-formyldihydrofolate + 5-amino-1-(5-phospho-beta-D-ribosyl)imidazole-4-carboxamide = 5-formamido-1-(5-phospho-D-ribosyl)imidazole-4-carboxamide + 7,8-dihydrofolate. The enzyme catalyses IMP + H2O = 5-formamido-1-(5-phospho-D-ribosyl)imidazole-4-carboxamide. The catalysed reaction is 5-amino-1-(5-phospho-D-ribosyl)imidazole-4-thiocarboxamide + 10-formyldihydrofolate = 6-thio-IMP + 7,8-dihydrofolate + H2O. The protein operates within purine metabolism; IMP biosynthesis via de novo pathway; 5-formamido-1-(5-phospho-D-ribosyl)imidazole-4-carboxamide from 5-amino-1-(5-phospho-D-ribosyl)imidazole-4-carboxamide (10-formyl THF route): step 1/1. It functions in the pathway purine metabolism; IMP biosynthesis via de novo pathway; IMP from 5-formamido-1-(5-phospho-D-ribosyl)imidazole-4-carboxamide: step 1/1. AMP and XMP inhibit AICAR formyltransferase activity. AICAR formyltransferase activity is inhibited by N-(6-fluoro-1-oxo-1,2-dihydroisoquinolin-7-yl)-5- [(3R)-3-hydroxypyrrolidin-1-yl]thiophene-2-sulfonamide (LSN 3213128), which acts as a tumor suppression in cancer cell lines. Its function is as follows. Bifunctional enzyme that catalyzes the last two steps of purine biosynthesis. Acts as a transformylase that incorporates a formyl group to the AMP analog AICAR (5-amino-1-(5-phospho-beta-D-ribosyl)imidazole-4-carboxamide) to produce the intermediate formyl-AICAR (FAICAR). Can use both 10-formyldihydrofolate and 10-formyltetrahydrofolate as the formyl donor in this reaction. Also catalyzes the cyclization of FAICAR to inosine monophosphate (IMP). Is able to convert thio-AICAR to 6-mercaptopurine ribonucleotide, an inhibitor of purine biosynthesis used in the treatment of human leukemias. Promotes insulin receptor/INSR autophosphorylation and is involved in INSR internalization. The sequence is that of Bifunctional purine biosynthesis protein ATIC from Homo sapiens (Human).